The sequence spans 292 residues: MPQHDQLHRYLFENFAVRGELVTVSETLQQILDNHTYPQPVKTVLAELLVATSLLTATLKFAGDITVQLQGDGPLSLAVINGNNQQQMRGVARVQGDIPDNADLKTLVGNGYLVITITPEEGERYQGVVGLEGDTLAACLEDYFLRSEQLPTRLFIRTGDVDGKPAAGGMLLQVMPAQNAQAEDFDHLAMLTETIKSEELLTLPANDVLWRLYHEEEVTLYDPQNVEFKCTCSRERCAGALKTLPDEEVDSILAEEGEIDMHCDYCGNHYLFNAMDIAEIRNNASPADPQVH.

Disulfide bonds link Cys230–Cys232 and Cys263–Cys266.

This sequence belongs to the HSP33 family. Under oxidizing conditions two disulfide bonds are formed involving the reactive cysteines. Under reducing conditions zinc is bound to the reactive cysteines and the protein is inactive.

The protein localises to the cytoplasm. Redox regulated molecular chaperone. Protects both thermally unfolding and oxidatively damaged proteins from irreversible aggregation. Plays an important role in the bacterial defense system toward oxidative stress. This is 33 kDa chaperonin from Salmonella choleraesuis (strain SC-B67).